The chain runs to 123 residues: Alpha-lactalbumin (123 aa).

Residues 1–123 (KQFTKCELSQ…KLEQWLCEEL (123 aa)) form the C-type lysozyme domain. Intrachain disulfides connect C6-C120, C28-C111, C61-C77, and C73-C91. Positions 79, 82, 84, 87, and 88 each coordinate Ca(2+).

It belongs to the glycosyl hydrolase 22 family. As to quaternary structure, lactose synthase (LS) is a heterodimer of a catalytic component, beta1,4-galactosyltransferase (beta4Gal-T1) and a regulatory component, alpha-lactalbumin (LA). Mammary gland specific. Secreted in milk.

Its subcellular location is the secreted. In terms of biological role, regulatory subunit of lactose synthase, changes the substrate specificity of galactosyltransferase in the mammary gland making glucose a good acceptor substrate for this enzyme. This enables LS to synthesize lactose, the major carbohydrate component of milk. In other tissues, galactosyltransferase transfers galactose onto the N-acetylglucosamine of the oligosaccharide chains in glycoproteins. The sequence is that of Alpha-lactalbumin (LALBA) from Equus asinus (Donkey).